The chain runs to 322 residues: Crystallin J1A (322 aa).

This sequence belongs to the ADP-ribosylglycohydrolase family. J1 crystallin subfamily. As to expression, expressed in the rhopalia. Present in both the large and small eyes.

In Tripedalia cystophora (Jellyfish), this protein is Crystallin J1A.